A 110-amino-acid chain; its full sequence is Large ribosomal subunit protein uL22 (110 aa).

It belongs to the universal ribosomal protein uL22 family. As to quaternary structure, part of the 50S ribosomal subunit.

Its function is as follows. This protein binds specifically to 23S rRNA; its binding is stimulated by other ribosomal proteins, e.g. L4, L17, and L20. It is important during the early stages of 50S assembly. It makes multiple contacts with different domains of the 23S rRNA in the assembled 50S subunit and ribosome. Functionally, the globular domain of the protein is located near the polypeptide exit tunnel on the outside of the subunit, while an extended beta-hairpin is found that lines the wall of the exit tunnel in the center of the 70S ribosome. In Klebsiella pneumoniae (strain 342), this protein is Large ribosomal subunit protein uL22.